Reading from the N-terminus, the 572-residue chain is Cytosolic Fe-S cluster assembly factor NAR1 (572 aa).

Cys20, Cys62, Cys65, Cys68, Cys205, and Cys260 together coordinate [4Fe-4S] cluster. A disordered region spans residues 416–436; sequence ARPSRMPGGKPIGSARRPNGK. [4Fe-4S] cluster-binding residues include Cys450 and Cys454.

This sequence belongs to the NARF family.

Component of the cytosolic Fe/S protein assembly machinery. Required for maturation of extramitochondrial Fe/S proteins. May play a role in the transfer of pre-assembled Fe/S clusters to target apoproteins. This chain is Cytosolic Fe-S cluster assembly factor NAR1 (NAR1), found in Botryotinia fuckeliana (strain B05.10) (Noble rot fungus).